Here is a 443-residue protein sequence, read N- to C-terminus: ATP-dependent protease ATPase subunit HslU (443 aa).

Residues Ile18, 60 to 65 (GVGKTE), Asp256, Glu321, and Arg393 contribute to the ATP site.

Belongs to the ClpX chaperone family. HslU subfamily. In terms of assembly, a double ring-shaped homohexamer of HslV is capped on each side by a ring-shaped HslU homohexamer. The assembly of the HslU/HslV complex is dependent on binding of ATP.

It is found in the cytoplasm. Its function is as follows. ATPase subunit of a proteasome-like degradation complex; this subunit has chaperone activity. The binding of ATP and its subsequent hydrolysis by HslU are essential for unfolding of protein substrates subsequently hydrolyzed by HslV. HslU recognizes the N-terminal part of its protein substrates and unfolds these before they are guided to HslV for hydrolysis. This chain is ATP-dependent protease ATPase subunit HslU, found in Buchnera aphidicola subsp. Acyrthosiphon pisum (strain APS) (Acyrthosiphon pisum symbiotic bacterium).